The chain runs to 782 residues: E3 ubiquitin-protein ligase SopA (782 aa).

Positions Gly136–Ala171 are disordered. Residues Pro157–Ala171 show a composition bias toward low complexity. Catalysis depends on Cys753, which acts as the Glycyl thioester intermediate.

Belongs to the SopA E3 ligase family. Ubiquitinated in the presence of host E1 ubiquitin-activating enzyme, E2 ubiquitin-conjugating enzyme and ubiquitin.

The protein localises to the secreted. The protein resides in the host cell. The catalysed reaction is S-ubiquitinyl-[E2 ubiquitin-conjugating enzyme]-L-cysteine + [acceptor protein]-L-lysine = [E2 ubiquitin-conjugating enzyme]-L-cysteine + N(6)-ubiquitinyl-[acceptor protein]-L-lysine.. Functionally, effector proteins function to alter host cell physiology and promote bacterial survival in host tissues. This protein is an E3 ubiquitin ligase that interferes with host's ubiquitination pathway. For instance, prevents host innate immune response by ubiquitinating and thus sending to degradation host E3 ubiquitin ligases TRIM56 and TRIM65. The sequence is that of E3 ubiquitin-protein ligase SopA (sopA) from Salmonella typhimurium (strain D23580).